A 318-amino-acid chain; its full sequence is MSVVVYAPASIGNVSVGFDVLGAAVSPIDGTLLGDRVKVEAGAEAFTLKTAGRFVDKLPANPQENIVYDCWQVFARELEKKSVVLKPLTMTLEKNMPIGSGLGSSACSIVAALDALNQFHASPLDETELLALMGEMEGKISGSIHYDNVAPCYLGGVQLMLEELGIISQSVPSFDDWYWVMAYPGIKVSTAEARAILPAQYRRQDIVAHGRYLAGFIHACHTQQPELAAKMIKDVIAEPYREKLLPGFAKARNYAASAGALATGISGSGPTLFSVCKEQAVAERVARWLEQNYVQNEEGFVHICRLDKQGSKVTGSEL.

97-107 (PIGSGLGSSAC) serves as a coordination point for ATP.

It belongs to the GHMP kinase family. Homoserine kinase subfamily.

It localises to the cytoplasm. It catalyses the reaction L-homoserine + ATP = O-phospho-L-homoserine + ADP + H(+). Its pathway is amino-acid biosynthesis; L-threonine biosynthesis; L-threonine from L-aspartate: step 4/5. In terms of biological role, catalyzes the ATP-dependent phosphorylation of L-homoserine to L-homoserine phosphate. This Vibrio cholerae serotype O1 (strain M66-2) protein is Homoserine kinase.